Here is a 172-residue protein sequence, read N- to C-terminus: CD164 sialomucin-like 2 protein (172 aa).

Positions 1 to 29 (MAAPGPRALRAALCGGCCCLLLCAQLVLA) are cleaved as a signal peptide. The Extracellular segment spans residues 30–137 (GKGARGFGRG…PEDHSPGFDG (108 aa)). 2 N-linked (GlcNAc...) asparagine glycosylation sites follow: Asn69 and Asn101. The interval 108 to 132 (ASHHHSTEEPKPSTTGSPPIPEDHS) is disordered. Residues 138-158 (ASFIGGIVLVLSLQATAFFVL) form a helical membrane-spanning segment. Over 159–172 (RFLKAKDSTYQTLI) the chain is Cytoplasmic.

It belongs to the CD164 family.

Its subcellular location is the membrane. In Mus musculus (Mouse), this protein is CD164 sialomucin-like 2 protein (Cd164l2).